A 212-amino-acid polypeptide reads, in one-letter code: Thymidylate kinase (212 aa).

11–18 (GPEGAGKS) provides a ligand contact to ATP.

It belongs to the thymidylate kinase family.

It catalyses the reaction dTMP + ATP = dTDP + ADP. In terms of biological role, phosphorylation of dTMP to form dTDP in both de novo and salvage pathways of dTTP synthesis. This Streptococcus sanguinis (strain SK36) protein is Thymidylate kinase.